A 111-amino-acid chain; its full sequence is uncharacterized protein (111 aa).

Transmembrane regions (helical) follow at residues 22-42 (ASLI…ANIT), 48-68 (LTPA…VSVL), and 75-95 (VLVT…PKIL).

Its subcellular location is the membrane. This is an uncharacterized protein from Saccharomyces cerevisiae (strain ATCC 204508 / S288c) (Baker's yeast).